The sequence spans 221 residues: Crossover junction endodeoxyribonuclease RuvC (221 aa).

Active-site residues include D12, E73, and D146. Mg(2+) is bound by residues D12, E73, and D146. A disordered region spans residues 169-221 (SQYSEQELEKRRRVQQGKLGKAKSTYNAEQAQSHASDPAKAAHPSQFQRTDTN). Residues 192 to 203 (STYNAEQAQSHA) show a composition bias toward polar residues.

Belongs to the RuvC family. Homodimer which binds Holliday junction (HJ) DNA. The HJ becomes 2-fold symmetrical on binding to RuvC with unstacked arms; it has a different conformation from HJ DNA in complex with RuvA. In the full resolvosome a probable DNA-RuvA(4)-RuvB(12)-RuvC(2) complex forms which resolves the HJ. Mg(2+) is required as a cofactor.

It localises to the cytoplasm. It catalyses the reaction Endonucleolytic cleavage at a junction such as a reciprocal single-stranded crossover between two homologous DNA duplexes (Holliday junction).. Its function is as follows. The RuvA-RuvB-RuvC complex processes Holliday junction (HJ) DNA during genetic recombination and DNA repair. Endonuclease that resolves HJ intermediates. Cleaves cruciform DNA by making single-stranded nicks across the HJ at symmetrical positions within the homologous arms, yielding a 5'-phosphate and a 3'-hydroxyl group; requires a central core of homology in the junction. The consensus cleavage sequence is 5'-(A/T)TT(C/G)-3'. Cleavage occurs on the 3'-side of the TT dinucleotide at the point of strand exchange. HJ branch migration catalyzed by RuvA-RuvB allows RuvC to scan DNA until it finds its consensus sequence, where it cleaves and resolves the cruciform DNA. The protein is Crossover junction endodeoxyribonuclease RuvC of Corynebacterium glutamicum (strain ATCC 13032 / DSM 20300 / JCM 1318 / BCRC 11384 / CCUG 27702 / LMG 3730 / NBRC 12168 / NCIMB 10025 / NRRL B-2784 / 534).